The sequence spans 359 residues: Non-functional pseudokinase ZRK2 (359 aa).

Basic residues predominate over residues 1–10 (MKSMVKKLKQ). A disordered region spans residues 1 to 20 (MKSMVKKLKQSLRSGSLEKR). Residues 64–356 (LKATSNFGSS…KELKQIETLF (293 aa)) form the Protein kinase domain. ATP-binding positions include 70–78 (FGSSCFVTA) and Lys-97.

It belongs to the protein kinase superfamily. Ser/Thr protein kinase family. ZRK subfamily.

The protein is Non-functional pseudokinase ZRK2 of Arabidopsis thaliana (Mouse-ear cress).